The chain runs to 73 residues: Translation initiation factor IF-1 (73 aa).

Residues 1-73 (MSKKKDVIEM…TRGRITYRYK (73 aa)) enclose the S1-like domain.

It belongs to the IF-1 family. Component of the 30S ribosomal translation pre-initiation complex which assembles on the 30S ribosome in the order IF-2 and IF-3, IF-1 and N-formylmethionyl-tRNA(fMet); mRNA recruitment can occur at any time during PIC assembly.

The protein localises to the cytoplasm. Functionally, one of the essential components for the initiation of protein synthesis. Stabilizes the binding of IF-2 and IF-3 on the 30S subunit to which N-formylmethionyl-tRNA(fMet) subsequently binds. Helps modulate mRNA selection, yielding the 30S pre-initiation complex (PIC). Upon addition of the 50S ribosomal subunit IF-1, IF-2 and IF-3 are released leaving the mature 70S translation initiation complex. This is Translation initiation factor IF-1 from Chloroflexus aurantiacus (strain ATCC 29366 / DSM 635 / J-10-fl).